The sequence spans 357 residues: Gene 58 protein (357 aa).

It belongs to the herpesviridae BMRF2 family.

This Saimiri sciureus (Common squirrel monkey) protein is Gene 58 protein (58).